The following is a 274-amino-acid chain: MEIRERILADMQVAETIDAHEEIRKSVEFLKAYLKKNTFLKSFVLGISGGQDSTLTGKLAQMAISEMRAETGDDEYQFFAVSLPYGTQLDESDRQDALNFMEPDNRLTVNIKASVDASVAALAEAGVELSDFAKGNEKARERMKVQYAIAAMHKGVVVGTDHSAEAVTGFYTKYGDGGTDINPLFRLNKRQGKALLKELGCPEHLYLKKPTADLEDNKPALPDEVALGVTYDQIDDYLEGKEVPADAAAKIENWFIKTEHKRHMAITIFDDFWK.

46 to 53 (GISGGQDS) contacts ATP. A Mg(2+)-binding site is contributed by D52. R140 contributes to the deamido-NAD(+) binding site. T160 contacts ATP. Position 165 (E165) interacts with Mg(2+). Residues K173 and D180 each coordinate deamido-NAD(+). The ATP site is built by K189 and T211. A deamido-NAD(+)-binding site is contributed by 260 to 261 (HK).

Belongs to the NAD synthetase family. Homodimer.

It catalyses the reaction deamido-NAD(+) + NH4(+) + ATP = AMP + diphosphate + NAD(+) + H(+). The protein operates within cofactor biosynthesis; NAD(+) biosynthesis; NAD(+) from deamido-NAD(+) (ammonia route): step 1/1. Catalyzes the ATP-dependent amidation of deamido-NAD to form NAD. Uses ammonia as a nitrogen source. This is NH(3)-dependent NAD(+) synthetase from Listeria monocytogenes serotype 4b (strain CLIP80459).